Here is a 314-residue protein sequence, read N- to C-terminus: DNA-directed RNA polymerase subunit alpha (314 aa).

The tract at residues 1–228 (MIEIEKPRIE…EHLNIFVGLT (228 aa)) is alpha N-terminal domain (alpha-NTD). Residues 246–314 (EKVLEMSIEE…DLGLGLRKED (69 aa)) are alpha C-terminal domain (alpha-CTD).

It belongs to the RNA polymerase alpha chain family. As to quaternary structure, homodimer. The RNAP catalytic core consists of 2 alpha, 1 beta, 1 beta' and 1 omega subunit. When a sigma factor is associated with the core the holoenzyme is formed, which can initiate transcription.

It carries out the reaction RNA(n) + a ribonucleoside 5'-triphosphate = RNA(n+1) + diphosphate. Its function is as follows. DNA-dependent RNA polymerase catalyzes the transcription of DNA into RNA using the four ribonucleoside triphosphates as substrates. The polypeptide is DNA-directed RNA polymerase subunit alpha (Staphylococcus aureus (strain Mu3 / ATCC 700698)).